We begin with the raw amino-acid sequence, 180 residues long: Isopentenyl-diphosphate Delta-isomerase (180 aa).

Positions 26 and 32 each coordinate Mn(2+). Residues 30-168 (ALHLAFSVLL…PELFTAWFPQ (139 aa)) form the Nudix hydrolase domain. C70 is an active-site residue. C70 is a Mg(2+) binding site. H72 contacts Mn(2+). Residue E90 participates in Mg(2+) binding. Residues E117 and E119 each coordinate Mn(2+). Residue E119 is part of the active site.

The protein belongs to the IPP isomerase type 1 family. The cofactor is Mg(2+). Requires Mn(2+) as cofactor.

It is found in the cytoplasm. The enzyme catalyses isopentenyl diphosphate = dimethylallyl diphosphate. The protein operates within isoprenoid biosynthesis; dimethylallyl diphosphate biosynthesis; dimethylallyl diphosphate from isopentenyl diphosphate: step 1/1. Catalyzes the 1,3-allylic rearrangement of the homoallylic substrate isopentenyl (IPP) to its highly electrophilic allylic isomer, dimethylallyl diphosphate (DMAPP). The protein is Isopentenyl-diphosphate Delta-isomerase of Photobacterium profundum (strain SS9).